The chain runs to 93 residues: Putative pterin-4-alpha-carbinolamine dehydratase (93 aa).

The protein belongs to the pterin-4-alpha-carbinolamine dehydratase family.

It carries out the reaction (4aS,6R)-4a-hydroxy-L-erythro-5,6,7,8-tetrahydrobiopterin = (6R)-L-erythro-6,7-dihydrobiopterin + H2O. The protein is Putative pterin-4-alpha-carbinolamine dehydratase of Mycolicibacterium vanbaalenii (strain DSM 7251 / JCM 13017 / BCRC 16820 / KCTC 9966 / NRRL B-24157 / PYR-1) (Mycobacterium vanbaalenii).